The sequence spans 642 residues: uncharacterized protein (642 aa).

The Mg(2+) site is built by E15 and D118. Positions 29 to 149 (VCVDTCVVID…YNLAKAQGIE (121 aa)) constitute a PINc domain. One can recognise a KH domain in the interval 510–578 (DNSIDLIVPE…ELESTRIYET (69 aa)).

This sequence in the N-terminal section; belongs to the PINc/VapC protein family. Requires Mg(2+) as cofactor.

This is an uncharacterized protein from Methanocaldococcus jannaschii (strain ATCC 43067 / DSM 2661 / JAL-1 / JCM 10045 / NBRC 100440) (Methanococcus jannaschii).